The following is a 41-amino-acid chain: Putative toxic protein TimP (41 aa).

A transmembrane helix spans residues 1 to 17; sequence MKIRCFCIVLIVSGALL.

This sequence belongs to the TimP toxin family.

The protein localises to the cell inner membrane. Functionally, putative toxic component of a potential type I toxin-antitoxin (TA) system. Neutralized by sRNA antitoxin TimR which binds to the 5' UTR of timP mRNA and inhibits translation. The antitoxin gene is encoded immediately upstream and transcribed divergently from the toxin gene; antitoxin RNA is less stable than timP mRNA. The protein is Putative toxic protein TimP of Escherichia coli (strain K12).